The sequence spans 316 residues: Lys-63-specific deubiquitinase BRCC36 (316 aa).

At Ala2 the chain carries N-acetylalanine. The region spanning 12 to 179 (VHLESDAFLV…YTCFQSIQAQ (168 aa)) is the MPN domain. Residues His122, His124, and Asp135 each contribute to the Zn(2+) site. Positions 122 to 135 (HSHPHITVWPSHVD) match the JAMM motif motif. Phosphoserine is present on Ser258.

The protein belongs to the peptidase M67A family. BRCC36 subfamily. Component of the ARISC complex, at least composed of UIMC1/RAP80, ABRAXAS1, BRCC3/BRCC36, BABAM2 and BABAM1/NBA1. Component of the BRCA1-A complex, at least composed of BRCA1, BARD1, UIMC1/RAP80, ABRAXAS1, BRCC3/BRCC36, BABAM2 and BABAM1/NBA1. In the BRCA1-A complex, interacts directly with ABRAXAS1 and BABAM2. Component of the BRISC complex, at least composed of ABRAXAS2, BRCC3/BRCC36, BABAM2 and BABAM1/NBA1. Identified in a complex with SHMT2 and the other subunits of the BRISC complex. In the BRISC complex, interacts directly with ABRAXAS2. Identified in a complex with ABRAXAS2 and NUMA1. The BRISC complex interacts with the CSN complex. Component of the BRCA1/BRCA2 containing complex (BRCC), which also contains BRCA1, BRCA2, BARD1, BABAM2 and RAD51. BRCC is a ubiquitin E3 ligase complex that enhances cellular survival following DNA damage. Interacts with BRCA1. Binds polyubiquitin. Interacts with PWWP2B. Interacts with HDAC1; this interaction is enhanced in the presence of PWWP2B. Zn(2+) serves as cofactor.

Its subcellular location is the nucleus. The protein resides in the cytoplasm. It is found in the cytoskeleton. The protein localises to the spindle pole. In terms of biological role, metalloprotease that specifically cleaves 'Lys-63'-linked polyubiquitin chains. Does not have activity toward 'Lys-48'-linked polyubiquitin chains. Component of the BRCA1-A complex, a complex that specifically recognizes 'Lys-63'-linked ubiquitinated histones H2A and H2AX at DNA lesions sites, leading to target the BRCA1-BARD1 heterodimer to sites of DNA damage at double-strand breaks (DSBs). In the BRCA1-A complex, it specifically removes 'Lys-63'-linked ubiquitin on histones H2A and H2AX, antagonizing the RNF8-dependent ubiquitination at double-strand breaks (DSBs). Catalytic subunit of the BRISC complex, a multiprotein complex that specifically cleaves 'Lys-63'-linked ubiquitin in various substrates. Mediates the specific 'Lys-63'-specific deubiquitination associated with the COP9 signalosome complex (CSN), via the interaction of the BRISC complex with the CSN complex. The BRISC complex is required for normal mitotic spindle assembly and microtubule attachment to kinetochores via its role in deubiquitinating NUMA1. Plays a role in interferon signaling via its role in the deubiquitination of the interferon receptor IFNAR1; deubiquitination increases IFNAR1 activity by enhancing its stability and cell surface expression. Acts as a regulator of the NLRP3 inflammasome by mediating deubiquitination of NLRP3, leading to NLRP3 inflammasome assembly. Down-regulates the response to bacterial lipopolysaccharide (LPS) via its role in IFNAR1 deubiquitination. Deubiquitinates HDAC1 and PWWP2B leading to their stabilization. The protein is Lys-63-specific deubiquitinase BRCC36 (BRCC3) of Callithrix jacchus (White-tufted-ear marmoset).